The following is a 219-amino-acid chain: Large ribosomal subunit protein bL25 (219 aa).

The segment at 188 to 219 (TVAAPADTAVQPESSSTKGKKDEDGALAKDKK) is disordered. Over residues 206 to 219 (GKKDEDGALAKDKK) the composition is skewed to basic and acidic residues.

This sequence belongs to the bacterial ribosomal protein bL25 family. CTC subfamily. In terms of assembly, part of the 50S ribosomal subunit; part of the 5S rRNA/L5/L18/L25 subcomplex. Contacts the 5S rRNA. Binds to the 5S rRNA independently of L5 and L18.

Its function is as follows. This is one of the proteins that binds to the 5S RNA in the ribosome where it forms part of the central protuberance. The sequence is that of Large ribosomal subunit protein bL25 from Elusimicrobium minutum (strain Pei191).